The chain runs to 925 residues: MTNANMQGKIRIYDLARDLGRDNRDVMAVCQRLGIAHKTHSSTISEQEADSIREAFQRGLPPGGRKKAKIQQQGAAAANKQQILEVRRPPVGYQPPVRTEVSQILVSTVTPAVPTEAQPLPIPTLPELPVPEQVAEQAAAPSVQEAVEPIAVSPVTSPLPIDAADVEADNYTADEDSMPISIAQTVVEAPAAPTSEAAPPEPEPTPLPAPAAEAPQPVRPPAPPAPAKPTPAPAPAPRPTAEQPSEPRRPQPPAQPPSRPEKRGGPLIAPNRGGLQPTRPVPAQPAPQTPTRSGSGIAKKGAITKAGSGSGGGRPGGPMRRRDEREAAVVDEQPKILLLSGNISVQDLAQRMHVPTTEIIKTLFMKSVMVNINQTLDQATAELVARELGYEVQAETAVAQATKTEMLDVGDIESLEVRPPVVTIMGHVDHGKTSLLDAIRSARVAEGEAGGITQHIGAYQIEVPTEAGPRKLVFLDTPGHEAFTAMRARGAKVTDITVLVVAADDGVKPQTIEAISHAKAAGVPILVAINKVDKPDANPERVKQELTEYDLVPEEWGGKTVMVPVSAKQKLNLDLLLENLLLVADYELELMANPNRQAKGTIIEANLDKARGPVATALVQNGTLHVGDIIVVGSIFGKVRALYDDRGNRVDAAPPSMPVEVLGLTDVPQAGDEFEVYSDEREARRIADERTSKARENRLQQQMASRRVSLGAFSAQAQEGELKELALIIRADVQGSVEAIRASLEKLPQDKVQLRVLQAAAGEVSETDIDLAAASNAVILSFSTTLASGARQAAEQAGVDVREYDVIYKLLEDIQLAMEGLLDPELVEEALGGAEVRQVFPVGKGQVAGCYVKEGKLLRNAQMRVRRGKEVVFEGHVDSLKRFKEDAKEVATGFECGVGSDKFASWQPGDLIECFRMVTQKRTLN.

The segment at 190–329 (PAAPTSEAAP…RRRDEREAAV (140 aa)) is disordered. Pro residues-rich tracts occupy residues 199 to 209 (PPEPEPTPLPA), 217 to 238 (PVRPPAPPAPAKPTPAPAPAPR), and 279 to 288 (RPVPAQPAPQ). The segment covering 289–307 (TPTRSGSGIAKKGAITKAG) has biased composition (low complexity). Basic and acidic residues predominate over residues 320-329 (RRRDEREAAV). In terms of domain architecture, tr-type G spans 417 to 589 (VRPPVVTIMG…LLLVADYELE (173 aa)). Residues 426–433 (GHVDHGKT) form a G1 region. 426–433 (GHVDHGKT) contributes to the GTP binding site. Positions 451–455 (GITQH) are G2. The segment at 476–479 (DTPG) is G3. GTP-binding positions include 476-480 (DTPGH) and 530-533 (NKVD). The interval 530–533 (NKVD) is G4. The interval 566 to 568 (SAK) is G5.

It belongs to the TRAFAC class translation factor GTPase superfamily. Classic translation factor GTPase family. IF-2 subfamily.

It localises to the cytoplasm. In terms of biological role, one of the essential components for the initiation of protein synthesis. Protects formylmethionyl-tRNA from spontaneous hydrolysis and promotes its binding to the 30S ribosomal subunits. Also involved in the hydrolysis of GTP during the formation of the 70S ribosomal complex. The protein is Translation initiation factor IF-2 of Gloeobacter violaceus (strain ATCC 29082 / PCC 7421).